Consider the following 65-residue polypeptide: MEKLKEFLKGVRDELKRVVWPSRELVVKATISVIIFSLAIGVYLWILDLTFTKIISFILSLRGSL.

Residues 1 to 27 are Cytoplasmic-facing; it reads MEKLKEFLKGVRDELKRVVWPSRELVV. A helical transmembrane segment spans residues 28 to 59; sequence KATISVIIFSLAIGVYLWILDLTFTKIISFIL. Over 60–65 the chain is Periplasmic; the sequence is SLRGSL.

This sequence belongs to the SecE/SEC61-gamma family. As to quaternary structure, component of the Sec protein translocase complex. Heterotrimer consisting of SecY, SecE and SecG subunits. The heterotrimers can form oligomers, although 1 heterotrimer is thought to be able to translocate proteins. Interacts with SecDF, and other proteins may be involved. The channel interacts with SecA via subunit SecY.

It is found in the cell inner membrane. In terms of biological role, essential subunit of the protein translocation channel SecYEG. Clamps together the 2 halves of SecY. May contact the channel plug during translocation. In Aquifex aeolicus (strain VF5), this protein is Protein translocase subunit SecE.